Consider the following 199-residue polypeptide: Probable chemoreceptor glutamine deamidase CheD (199 aa).

The protein belongs to the CheD family.

The enzyme catalyses L-glutaminyl-[protein] + H2O = L-glutamyl-[protein] + NH4(+). Its function is as follows. Probably deamidates glutamine residues to glutamate on methyl-accepting chemotaxis receptors (MCPs), playing an important role in chemotaxis. This is Probable chemoreceptor glutamine deamidase CheD from Cereibacter sphaeroides (strain ATCC 17023 / DSM 158 / JCM 6121 / CCUG 31486 / LMG 2827 / NBRC 12203 / NCIMB 8253 / ATH 2.4.1.) (Rhodobacter sphaeroides).